The sequence spans 159 residues: Ribonuclease H (159 aa).

One can recognise an RNase H type-1 domain in the interval 4-145 (THKQVNIYTD…CDKLARDAAE (142 aa)). Mg(2+) contacts are provided by aspartate 13, glutamate 51, aspartate 73, and aspartate 137.

The protein belongs to the RNase H family. Monomer. Mg(2+) is required as a cofactor.

It localises to the cytoplasm. The catalysed reaction is Endonucleolytic cleavage to 5'-phosphomonoester.. Its function is as follows. Endonuclease that specifically degrades the RNA of RNA-DNA hybrids. The sequence is that of Ribonuclease H from Shewanella denitrificans (strain OS217 / ATCC BAA-1090 / DSM 15013).